A 59-amino-acid polypeptide reads, in one-letter code: Ribosome modulation factor (59 aa).

This sequence belongs to the ribosome modulation factor family.

It localises to the cytoplasm. Its function is as follows. During stationary phase, converts 70S ribosomes to an inactive dimeric form (100S ribosomes). The protein is Ribosome modulation factor of Aeromonas veronii (strain B565).